The primary structure comprises 92 residues: Ferredoxin-like protein in nif region (92 aa).

2 4Fe-4S ferredoxin-type domains span residues 2–28 and 29–65; these read ALKIVESCVNCWACVDVCPSEAISLAG and PHFEISASKCTECDGDYAEKQCASICPVEGAILLADG. 8 residues coordinate [4Fe-4S] cluster: Cys9, Cys12, Cys15, Cys19, Cys38, Cys41, Cys50, and Cys54.

[4Fe-4S] cluster is required as a cofactor.

Its function is as follows. Ferredoxins are iron-sulfur proteins that transfer electrons in a wide variety of metabolic reactions. The sequence is that of Ferredoxin-like protein in nif region from Azotobacter vinelandii.